The following is a 159-amino-acid chain: MPSFDVVSELDKHEVTNAVDNAIKELDRRYDLKGKGTFEFKELTVTLTAEADFQLEAMIEILKLALVKRKIDGKCLEVKDAYASGKLMKQEAVLREGIDKELAKKIVAHVKEAKLKVQAAIQGEQVRITGKKRDDLQEAIAALRAYDSGMPLQFNNFRD.

Belongs to the YajQ family.

Functionally, nucleotide-binding protein. The sequence is that of Nucleotide-binding protein PSPTO_4393 from Pseudomonas syringae pv. tomato (strain ATCC BAA-871 / DC3000).